A 177-amino-acid chain; its full sequence is Inner membrane protein p22 (177 aa).

Residues 1 to 7 (MFNIKMT) lie on the Intravirion side of the membrane. Residues 8-28 (ISVLLIALIVLLIIILVVFLY) traverse the membrane as a helical segment. Topologically, residues 29 to 177 (YKKQQPPKKV…IALPRNHKHA (149 aa)) are virion surface.

The protein belongs to the asfivirus inner membrane protein p22 family.

Its subcellular location is the virion membrane. It localises to the host cell membrane. In African swine fever virus (isolate Warthog/Namibia/Wart80/1980) (ASFV), this protein is Inner membrane protein p22.